The chain runs to 436 residues: Nucleolar protein 4-like (436 aa).

Positions 1 to 184 (MSDSTWMSAD…KMNDSEGMDP (184 aa)) are disordered. Residues 41-61 (SESGSGNGSSTLNPSTSSSTQ) show a composition bias toward low complexity. Residue serine 130 is modified to Phosphoserine. The span at 160–169 (ADDDDDDHDD) shows a compositional bias: acidic residues. Residues 170–184 (HEDNDKMNDSEGMDP) show a composition bias toward basic and acidic residues. Serine 295 bears the Phosphoserine mark. Positions 351–366 (QPPASLQTGNHSNGPT) are enriched in polar residues. Residues 351 to 400 (QPPASLQTGNHSNGPTDLSMKGGASTTSTTPTPTPSSTSTSRPVPTAQLS) are disordered. The segment covering 375–396 (STTSTTPTPTPSSTSTSRPVPT) has biased composition (low complexity).

The polypeptide is Nucleolar protein 4-like (NOL4L) (Homo sapiens (Human)).